The primary structure comprises 52 residues: Large ribosomal subunit protein bL32c (52 aa).

This sequence belongs to the bacterial ribosomal protein bL32 family.

It is found in the plastid. Its subcellular location is the chloroplast. This is Large ribosomal subunit protein bL32c from Citrus sinensis (Sweet orange).